A 286-amino-acid polypeptide reads, in one-letter code: Bifunctional protein FolD (286 aa).

Residues 165-167 (GRS), Ser190, and Val231 each bind NADP(+).

Belongs to the tetrahydrofolate dehydrogenase/cyclohydrolase family. In terms of assembly, homodimer.

The catalysed reaction is (6R)-5,10-methylene-5,6,7,8-tetrahydrofolate + NADP(+) = (6R)-5,10-methenyltetrahydrofolate + NADPH. It carries out the reaction (6R)-5,10-methenyltetrahydrofolate + H2O = (6R)-10-formyltetrahydrofolate + H(+). The protein operates within one-carbon metabolism; tetrahydrofolate interconversion. In terms of biological role, catalyzes the oxidation of 5,10-methylenetetrahydrofolate to 5,10-methenyltetrahydrofolate and then the hydrolysis of 5,10-methenyltetrahydrofolate to 10-formyltetrahydrofolate. The sequence is that of Bifunctional protein FolD from Bacillus cytotoxicus (strain DSM 22905 / CIP 110041 / 391-98 / NVH 391-98).